The sequence spans 250 residues: Probable transcriptional regulatory protein RHA1_ro06891 (250 aa).

Belongs to the TACO1 family.

The protein resides in the cytoplasm. In Rhodococcus jostii (strain RHA1), this protein is Probable transcriptional regulatory protein RHA1_ro06891.